The chain runs to 214 residues: Large ribosomal subunit protein uL3 (214 aa).

Residues 129–157 (FGRGPMSHGSKNHRRPGSIGAGTTPGRVF) form a disordered region.

This sequence belongs to the universal ribosomal protein uL3 family. In terms of assembly, part of the 50S ribosomal subunit. Forms a cluster with proteins L14 and L19.

One of the primary rRNA binding proteins, it binds directly near the 3'-end of the 23S rRNA, where it nucleates assembly of the 50S subunit. This Synechococcus sp. (strain JA-2-3B'a(2-13)) (Cyanobacteria bacterium Yellowstone B-Prime) protein is Large ribosomal subunit protein uL3.